The sequence spans 232 residues: Orotidine 5'-phosphate decarboxylase (232 aa).

Substrate contacts are provided by residues D13, K35, 62 to 71, T122, R182, Q191, G211, and R212; that span reads DLKFHDIPNT. K64 acts as the Proton donor in catalysis.

It belongs to the OMP decarboxylase family. Type 1 subfamily. In terms of assembly, homodimer.

It carries out the reaction orotidine 5'-phosphate + H(+) = UMP + CO2. Its pathway is pyrimidine metabolism; UMP biosynthesis via de novo pathway; UMP from orotate: step 2/2. Catalyzes the decarboxylation of orotidine 5'-monophosphate (OMP) to uridine 5'-monophosphate (UMP). In Pseudomonas aeruginosa (strain LESB58), this protein is Orotidine 5'-phosphate decarboxylase.